Consider the following 199-residue polypeptide: Small ribosomal subunit protein uS2 (199 aa).

The protein belongs to the universal ribosomal protein uS2 family.

The polypeptide is Small ribosomal subunit protein uS2 (rps2) (Thermoplasma acidophilum (strain ATCC 25905 / DSM 1728 / JCM 9062 / NBRC 15155 / AMRC-C165)).